The chain runs to 336 residues: C4-dicarboxylate-binding periplasmic protein DctP (336 aa).

The first 31 residues, 1-31 (MTRLNTCTFIKQIVKMTSIAALLGASLNSWA), serve as a signal peptide directing secretion. (S)-malate contacts are provided by Lys48, Lys101, Arg176, Asn216, Asn220, and Tyr243. Positions 48, 101, 176, 216, 220, and 243 each coordinate succinate.

It belongs to the bacterial solute-binding protein 7 family. The complex comprises the extracytoplasmic solute receptor protein DctP, and the two transmembrane proteins DctQ and DctM.

The protein localises to the periplasm. Its function is as follows. Part of the tripartite ATP-independent periplasmic (TRAP) transport system DctPQM involved in C4-dicarboxylates uptake. Required for the utilization of succinate, fumarate, L-malate and alpha-ketoglutarate. Binds succinate and malate. The polypeptide is C4-dicarboxylate-binding periplasmic protein DctP (Shewanella loihica (strain ATCC BAA-1088 / PV-4)).